The chain runs to 36 residues: Conotoxin Bu21 (36 aa).

Positions 1–21 (DGANAEATDNKPGVFERDEKK) are excised as a propeptide. Cystine bridges form between Cys22-Cys28 and Cys23-Cys34.

It belongs to the conotoxin A superfamily. As to expression, expressed by the venom duct.

Its subcellular location is the secreted. The polypeptide is Conotoxin Bu21 (Conus bullatus (Bubble cone)).